Consider the following 336-residue polypeptide: MSLIVPENYDPKLSIRETEEAIRYIRETFQDEIGKELNLQRMSAPMFVEQSTGLNDNLNGVEAPVSFTMKDLPGETIEIVHSLAKWKRFALKKYGFGLHEGLYTNMNAIRKDEDLDNFHSIYVDQWDWEKVIAKEERTEATLKATVRQVFKVIKHMEHEVWYKFPQAVYHLPDEIHFVTTQGLEDRWPELSPMEREDKIAKELGCVFVMKIGDKLQRSGEPHDGRAPDYDDWSLNGDIIFWYEPLQTKLEVSSMGIRVDERAMKEQLEKAHATDRAELPFHRDLLAGKMPYTIGGGIGQSRLCMLLLGKAHVGEVQASIWPEEMKEACAKAKIQLL.

This sequence belongs to the class-II aminoacyl-tRNA synthetase family. AsnA subfamily.

It localises to the cytoplasm. The enzyme catalyses L-aspartate + NH4(+) + ATP = L-asparagine + AMP + diphosphate + H(+). The protein operates within amino-acid biosynthesis; L-asparagine biosynthesis; L-asparagine from L-aspartate (ammonia route): step 1/1. The protein is Aspartate--ammonia ligase of Limosilactobacillus fermentum (strain NBRC 3956 / LMG 18251) (Lactobacillus fermentum).